We begin with the raw amino-acid sequence, 243 residues long: uncharacterized protein (243 aa).

The N-terminal stretch at 1 to 16 is a signal peptide; it reads MKHFIILFLLLFVTAG. A lipid anchor (N-palmitoyl cysteine) is attached at Cys17. A lipid anchor (S-diacylglycerol cysteine) is attached at Cys17.

The protein localises to the cell membrane. This is an uncharacterized protein from Bacillus subtilis (strain 168).